A 484-amino-acid chain; its full sequence is Signal transduction histidine-protein kinase/phosphatase MprB (484 aa).

Residues 1–10 show a composition bias toward low complexity; it reads MAADNAGRWP. A disordered region spans residues 1-23; the sequence is MAADNAGRWPGQPPGPPAPTHPA. Residues 1–31 lie on the Cytoplasmic side of the membrane; the sequence is MAADNAGRWPGQPPGPPAPTHPASSVSLRWR. Residues 11-20 show a composition bias toward pro residues; that stretch reads GQPPGPPAPT. A helical membrane pass occupies residues 32-52; sequence VMLLAMSMVVISVVLMAVAVF. Topologically, residues 53–172 are extracellular; the sequence is AVTSRALYDD…TGKVLKRLGT (120 aa). A helical membrane pass occupies residues 173-193; it reads VLLIVGGLGVAVAAIAGGMVA. The HAMP domain maps to 194 to 246; sequence SAGLRPVGRLTQAAERVARTDDLRPIPVIGNDELARLTETFNMMLRALAESRE. At 194-484 the chain is on the cytoplasmic side; sequence SAGLRPVGRL…SPAGSDEAER (291 aa). Residues 254–474 form the Histidine kinase domain; sequence DAGHELRTPL…AMHVVLPGRP (221 aa). Phosphohistidine; by autocatalysis is present on His-257.

It depends on Mg(2+) as a cofactor. Mn(2+) serves as cofactor. Autophosphorylated.

It is found in the cell membrane. The enzyme catalyses ATP + protein L-histidine = ADP + protein N-phospho-L-histidine.. In terms of biological role, member of the two-component regulatory system MprB/MprA which contributes to maintaining a balance among several systems involved in stress resistance and is required for establishment and maintenance of persistent infection in the host. In response to environmental signals MprB acts both as a membrane-associated protein kinase that undergoes autophosphorylation and subsequently transfers the phosphate to MprA, and a protein phosphatase that dephosphorylates phospho-MprA. In Mycolicibacterium vanbaalenii (strain DSM 7251 / JCM 13017 / BCRC 16820 / KCTC 9966 / NRRL B-24157 / PYR-1) (Mycobacterium vanbaalenii), this protein is Signal transduction histidine-protein kinase/phosphatase MprB (mprB).